Here is a 72-residue protein sequence, read N- to C-terminus: MAMNTVFLHLSEEAIKRLNKLRGWRKVSRSAILREAVEQYLERQQFPVRKAKGGRQKGEVVGVDDQCKEHKE.

The segment at 51–72 (AKGGRQKGEVVGVDDQCKEHKE) is disordered.

This sequence belongs to the YiiE family.

This is an uncharacterized protein from Escherichia coli O157:H7.